The sequence spans 345 residues: N-acetyl-gamma-glutamyl-phosphate reductase (345 aa).

C149 is an active-site residue.

Belongs to the NAGSA dehydrogenase family. Type 1 subfamily.

It localises to the cytoplasm. It catalyses the reaction N-acetyl-L-glutamate 5-semialdehyde + phosphate + NADP(+) = N-acetyl-L-glutamyl 5-phosphate + NADPH + H(+). Its pathway is amino-acid biosynthesis; L-arginine biosynthesis; N(2)-acetyl-L-ornithine from L-glutamate: step 3/4. Catalyzes the NADPH-dependent reduction of N-acetyl-5-glutamyl phosphate to yield N-acetyl-L-glutamate 5-semialdehyde. The sequence is that of N-acetyl-gamma-glutamyl-phosphate reductase from Marinobacter nauticus (strain ATCC 700491 / DSM 11845 / VT8) (Marinobacter aquaeolei).